The sequence spans 256 residues: Protein FixA (256 aa).

The protein belongs to the ETF beta-subunit/FixA family. As to quaternary structure, heterodimer of FixA and FixB.

Its pathway is amine and polyamine metabolism; carnitine metabolism. Required for anaerobic carnitine reduction. May bring reductant to CaiA. This Shigella flexneri serotype 5b (strain 8401) protein is Protein FixA.